The primary structure comprises 1016 residues: Coiled-coil domain-containing protein 57 (1016 aa).

The interval 1-503 is centrosomal targeting domain; the sequence is MLPLCSEREL…HGLLPGQEAQ (503 aa). 3 coiled-coil regions span residues 14 to 607, 676 to 700, and 748 to 775; these read LARK…PVKT, SEVD…KHLK, and VTHL…LLEM. Disordered stretches follow at residues 500-519 and 549-573; these read QEAQ…DSPS and HLPP…DSTP. The interval 604 to 1016 is microtubule binding domain; that stretch reads PVKTSVATAD…SRIRNYNLKD (413 aa). 2 disordered regions span residues 781–921 and 933–1016; these read AEQG…LASS and GSSP…NLKD. Composition is skewed to polar residues over residues 846 to 859 and 934 to 945; these read QPHS…TNTP and SSPSGVPSQDNS.

In terms of assembly, interacts with CEP63; the interaction is required for their location to proximal end of centrioles. Interacts with microtubules.

It is found in the cytoplasm. It localises to the cytoskeleton. The protein localises to the microtubule organizing center. The protein resides in the centrosome. Its subcellular location is the centriolar satellite. It is found in the centriole. It localises to the spindle. Its function is as follows. Pleiotropic regulator of centriole duplication, mitosis, and ciliogenesis. Critical interface between centrosome and microtubule-mediated cellular processes. Centriole duplication protein required for recruitment of CEP63, CEP152, and PLK4 to the centrosome. Independent of its centrosomal targeting, localizes to and interacts with microtubules and regulates microtubule nucleation, stability, and mitotic progression. The polypeptide is Coiled-coil domain-containing protein 57 (Mus musculus (Mouse)).